Here is a 1248-residue protein sequence, read N- to C-terminus: Structural maintenance of chromosomes protein 1B (1248 aa).

32–39 (GPNGSGKS) contributes to the ATP binding site. Positions 163-502 (EFIGEYEAKK…EGKRQQKRAE (340 aa)) form a coiled coil. One can recognise an SMC hinge domain in the interval 514-629 (SVFGRLLDLC…ETVEEARHIA (116 aa)). 3 positions are modified to N6-acetyllysine: K648, K713, and K1032. The stretch at 666–912 (WDEKELHNLR…REVGKLQKEV (247 aa)) forms a coiled coil. Residues 1219 to 1228 (PDTEDQEGSR) are compositionally biased toward basic and acidic residues. Positions 1219–1248 (PDTEDQEGSRSHRKPRVPRVSMSPKSPQSR) are disordered.

It belongs to the SMC family. SMC1 subfamily. As to quaternary structure, forms a heterodimer with SMC3. Component of a meiosis-specific cohesin complex, probably composed of the SMC1B and SMC3 heterodimer attached via their SMC hinge domain, RAD21 (or its meiosis-specific related protein REC8), which link them, and STAG3, which interacts with RAD21 or REC8. The cohesin complex interacts with the cohesin loading complex subunits NIPBL/Scc2 (via HEAT repeats) and MAU2/Scc4. NIPBL directly contacts all members of the complex, RAD21, SMC1A/B, SMC3 and STAG1. As to expression, spermatocytes (at protein level). Testis and ovary specific. Not expressed in somatic cells.

Its subcellular location is the nucleus. The protein resides in the chromosome. It is found in the centromere. Meiosis-specific component of cohesin complex. Required for the maintenance of meiotic cohesion, but not, or only to a minor extent, for its establishment. Contributes to axial element (AE) formation and the organization of chromatin loops along the AE. Plays a key role in synapsis, recombination and chromosome movements. The cohesin complex is required for the cohesion of sister chromatids after DNA replication. The cohesin complex apparently forms a large proteinaceous ring within which sister chromatids can be trapped. At anaphase, the complex is cleaved and dissociates from chromatin, allowing sister chromatids to segregate. The meiosis-specific cohesin complex probably replaces mitosis specific cohesin complex when it dissociates from chromatin during prophase I. This Mus musculus (Mouse) protein is Structural maintenance of chromosomes protein 1B (Smc1b).